The sequence spans 93 residues: Small ribosomal subunit protein uS19c (93 aa).

The protein belongs to the universal ribosomal protein uS19 family.

The protein resides in the plastid. The protein localises to the chloroplast. Its function is as follows. Protein S19 forms a complex with S13 that binds strongly to the 16S ribosomal RNA. This is Small ribosomal subunit protein uS19c (rps19-A) from Zea mays (Maize).